Reading from the N-terminus, the 690-residue chain is Elongation factor G (690 aa).

One can recognise a tr-type G domain in the interval Glu8 to Leu283. GTP is bound by residues Ala17 to Thr24, Asp81 to His85, and Asn135 to Asp138.

This sequence belongs to the TRAFAC class translation factor GTPase superfamily. Classic translation factor GTPase family. EF-G/EF-2 subfamily.

Its subcellular location is the cytoplasm. Functionally, catalyzes the GTP-dependent ribosomal translocation step during translation elongation. During this step, the ribosome changes from the pre-translocational (PRE) to the post-translocational (POST) state as the newly formed A-site-bound peptidyl-tRNA and P-site-bound deacylated tRNA move to the P and E sites, respectively. Catalyzes the coordinated movement of the two tRNA molecules, the mRNA and conformational changes in the ribosome. The sequence is that of Elongation factor G from Rhodopseudomonas palustris (strain ATCC BAA-98 / CGA009).